Reading from the N-terminus, the 640-residue chain is Probable potassium transport system protein Kup 1 (640 aa).

The next 12 helical transmembrane spans lie at 25–45 (LVLA…LYAL), 65–85 (VVSL…VMVL), 115–135 (AVGW…DGVI), 153–173 (PALA…LFMI), 181–201 (VGAA…ALGL), 227–247 (GFAG…AEAL), 263–283 (WYGL…ALLL), 305–325 (MVAL…TAVF), 353–373 (IYLP…VLGF), 381–401 (AAFG…FAVL), 410–430 (WWAV…FWLA), and 438–458 (GGWL…CWFG).

It belongs to the HAK/KUP transporter (TC 2.A.72) family.

The protein resides in the cell inner membrane. The enzyme catalyses K(+)(in) + H(+)(in) = K(+)(out) + H(+)(out). In terms of biological role, transport of potassium into the cell. Likely operates as a K(+):H(+) symporter. This chain is Probable potassium transport system protein Kup 1, found in Chromobacterium violaceum (strain ATCC 12472 / DSM 30191 / JCM 1249 / CCUG 213 / NBRC 12614 / NCIMB 9131 / NCTC 9757 / MK).